A 338-amino-acid polypeptide reads, in one-letter code: DNA-directed RNA polymerase subunit alpha (338 aa).

The interval 1-226 (MLIAQRPTLS…ELFGLARELN (226 aa)) is alpha N-terminal domain (alpha-NTD). Positions 240-338 (DEQLAADLAL…DDAFVEDEQY (99 aa)) are alpha C-terminal domain (alpha-CTD).

The protein belongs to the RNA polymerase alpha chain family. In terms of assembly, homodimer. The RNAP catalytic core consists of 2 alpha, 1 beta, 1 beta' and 1 omega subunit. When a sigma factor is associated with the core the holoenzyme is formed, which can initiate transcription.

It carries out the reaction RNA(n) + a ribonucleoside 5'-triphosphate = RNA(n+1) + diphosphate. In terms of biological role, DNA-dependent RNA polymerase catalyzes the transcription of DNA into RNA using the four ribonucleoside triphosphates as substrates. This is DNA-directed RNA polymerase subunit alpha from Nocardioides sp. (strain ATCC BAA-499 / JS614).